The sequence spans 500 residues: Probable malate:quinone oxidoreductase (500 aa).

The protein belongs to the MQO family. FAD is required as a cofactor.

It catalyses the reaction (S)-malate + a quinone = a quinol + oxaloacetate. It participates in carbohydrate metabolism; tricarboxylic acid cycle; oxaloacetate from (S)-malate (quinone route): step 1/1. In Gluconobacter oxydans (strain 621H) (Gluconobacter suboxydans), this protein is Probable malate:quinone oxidoreductase.